Consider the following 228-residue polypeptide: Histidine decarboxylase (228 aa).

His-30 lines the substrate pocket. Lys-143 carries the N6-(pyridoxal phosphate)lysine modification.

The protein belongs to the group II decarboxylase family. As to quaternary structure, homotetramer. The cofactor is pyridoxal 5'-phosphate.

It catalyses the reaction L-histidine + H(+) = histamine + CO2. In Raoultella ornithinolytica (Klebsiella ornithinolytica), this protein is Histidine decarboxylase (hdc).